A 348-amino-acid chain; its full sequence is Erythronate-4-phosphate dehydrogenase (348 aa).

Residues Thr-46 and Thr-67 each contribute to the substrate site. Residue Asp-147 coordinates NAD(+). Arg-209 is a catalytic residue. Asp-233 contributes to the NAD(+) binding site. The active site involves Glu-238. His-255 functions as the Proton donor in the catalytic mechanism. Gly-258 contributes to the NAD(+) binding site. Substrate is bound at residue Tyr-259.

It belongs to the D-isomer specific 2-hydroxyacid dehydrogenase family. PdxB subfamily. As to quaternary structure, homodimer.

It is found in the cytoplasm. The enzyme catalyses 4-phospho-D-erythronate + NAD(+) = (R)-3-hydroxy-2-oxo-4-phosphooxybutanoate + NADH + H(+). Its pathway is cofactor biosynthesis; pyridoxine 5'-phosphate biosynthesis; pyridoxine 5'-phosphate from D-erythrose 4-phosphate: step 2/5. In terms of biological role, catalyzes the oxidation of erythronate-4-phosphate to 3-hydroxy-2-oxo-4-phosphonooxybutanoate. This chain is Erythronate-4-phosphate dehydrogenase, found in Bacteroides fragilis (strain YCH46).